A 940-amino-acid chain; its full sequence is Valine--tRNA ligase (940 aa).

Residues 47-57 (PNVTGVLHMGH) carry the 'HIGH' region motif. The short motif at 564–568 (KLSKS) is the 'KMSKS' region element. K567 lines the ATP pocket. A coiled-coil region spans residues 873-905 (EEHLLKEKGRLEKERVRLERAVENLERLLGDES).

The protein belongs to the class-I aminoacyl-tRNA synthetase family. ValS type 1 subfamily. Monomer.

The protein localises to the cytoplasm. It catalyses the reaction tRNA(Val) + L-valine + ATP = L-valyl-tRNA(Val) + AMP + diphosphate. Catalyzes the attachment of valine to tRNA(Val). As ValRS can inadvertently accommodate and process structurally similar amino acids such as threonine, to avoid such errors, it has a 'posttransfer' editing activity that hydrolyzes mischarged Thr-tRNA(Val) in a tRNA-dependent manner. The polypeptide is Valine--tRNA ligase (Chlamydia pneumoniae (Chlamydophila pneumoniae)).